Consider the following 180-residue polypeptide: Probable chorismate pyruvate-lyase (180 aa).

3 residues coordinate substrate: Arg76, Leu113, and Glu171.

The protein belongs to the UbiC family.

The protein localises to the cytoplasm. It catalyses the reaction chorismate = 4-hydroxybenzoate + pyruvate. It functions in the pathway cofactor biosynthesis; ubiquinone biosynthesis. Its function is as follows. Removes the pyruvyl group from chorismate, with concomitant aromatization of the ring, to provide 4-hydroxybenzoate (4HB) for the ubiquinone pathway. In Pseudoalteromonas translucida (strain TAC 125), this protein is Probable chorismate pyruvate-lyase.